The chain runs to 357 residues: Putative minor fimbrial subunit PmfE (357 aa).

Residues M1 to A28 form the signal peptide.

It is found in the fimbrium. The sequence is that of Putative minor fimbrial subunit PmfE (pmfE) from Proteus mirabilis (strain HI4320).